The following is a 512-amino-acid chain: Respiratory nitrate reductase 1 beta chain (512 aa).

3 4Fe-4S ferredoxin-type domains span residues 7–35, 175–206, and 208–237; these read VGMV…SREG, TFMM…KREE, and GIVL…FNWK. The [4Fe-4S] cluster site is built by Cys-16, Cys-19, Cys-22, Cys-26, Cys-184, Cys-187, and Cys-192. Residues Cys-196, Cys-217, and Cys-223 each coordinate [3Fe-4S] cluster. [4Fe-4S] cluster-binding residues include Cys-227, Cys-244, Cys-247, Cys-259, and Cys-263.

As to quaternary structure, dimer of heterotrimers each composed of an alpha, a beta and a gamma chain. Alpha and beta are catalytic chains; gamma chains are involved in binding the enzyme complex to the cytoplasmic membrane. Requires [4Fe-4S] cluster as cofactor. [3Fe-4S] cluster serves as cofactor.

The protein resides in the cell membrane. The catalysed reaction is nitrate + a quinol = a quinone + nitrite + H2O. Functionally, the nitrate reductase enzyme complex allows S.flexneri to use nitrate as an electron acceptor during anaerobic growth. The beta chain is an electron transfer unit containing four cysteine clusters involved in the formation of iron-sulfur centers. Electrons are transferred from the gamma chain to the molybdenum cofactor of the alpha subunit. In Shigella flexneri, this protein is Respiratory nitrate reductase 1 beta chain (narH).